A 508-amino-acid chain; its full sequence is Cobyric acid synthase (508 aa).

Residues 266–464 (SLRIAVVAYP…AHGLFESTEV (199 aa)) enclose the GATase cobBQ-type domain. Residue cysteine 347 is the Nucleophile of the active site. Histidine 456 is a catalytic residue.

Belongs to the CobB/CobQ family. CobQ subfamily.

It functions in the pathway cofactor biosynthesis; adenosylcobalamin biosynthesis. Functionally, catalyzes amidations at positions B, D, E, and G on adenosylcobyrinic A,C-diamide. NH(2) groups are provided by glutamine, and one molecule of ATP is hydrogenolyzed for each amidation. The polypeptide is Cobyric acid synthase (Methylibium petroleiphilum (strain ATCC BAA-1232 / LMG 22953 / PM1)).